Reading from the N-terminus, the 124-residue chain is Small ribosomal subunit protein uS12 (124 aa).

At aspartate 89 the chain carries 3-methylthioaspartic acid. The disordered stretch occupies residues 103-124 (DTAGVQNRNRGRSKYGAKRPKK). Basic residues predominate over residues 111 to 124 (NRGRSKYGAKRPKK).

It belongs to the universal ribosomal protein uS12 family. As to quaternary structure, part of the 30S ribosomal subunit. Contacts proteins S8 and S17. May interact with IF1 in the 30S initiation complex.

With S4 and S5 plays an important role in translational accuracy. In terms of biological role, interacts with and stabilizes bases of the 16S rRNA that are involved in tRNA selection in the A site and with the mRNA backbone. Located at the interface of the 30S and 50S subunits, it traverses the body of the 30S subunit contacting proteins on the other side and probably holding the rRNA structure together. The combined cluster of proteins S8, S12 and S17 appears to hold together the shoulder and platform of the 30S subunit. The chain is Small ribosomal subunit protein uS12 from Desulforudis audaxviator (strain MP104C).